We begin with the raw amino-acid sequence, 81 residues long: Small ribosomal subunit protein bS16 (81 aa).

The protein belongs to the bacterial ribosomal protein bS16 family.

The polypeptide is Small ribosomal subunit protein bS16 (Clostridium perfringens (strain ATCC 13124 / DSM 756 / JCM 1290 / NCIMB 6125 / NCTC 8237 / Type A)).